Consider the following 108-residue polypeptide: Large ribosomal subunit protein uL23 (108 aa).

It belongs to the universal ribosomal protein uL23 family. In terms of assembly, part of the 50S ribosomal subunit. Contacts protein L29, and trigger factor when it is bound to the ribosome.

In terms of biological role, one of the early assembly proteins it binds 23S rRNA. One of the proteins that surrounds the polypeptide exit tunnel on the outside of the ribosome. Forms the main docking site for trigger factor binding to the ribosome. This chain is Large ribosomal subunit protein uL23, found in Mycoplasmoides gallisepticum (strain R(low / passage 15 / clone 2)) (Mycoplasma gallisepticum).